Reading from the N-terminus, the 208-residue chain is Claudin-like protein ZF-A89 (208 aa).

The next 4 membrane-spanning stretches (helical) occupy residues 8-28, 82-102, 117-137, and 160-180; these read LLATVLAIIGWLGEIVICALP, ALVVISIIVTFMGVFLTIAGG, VVVAAGVFFLVGGILCLIPVC, and LGASLFIGWCASGLLLLGGAL.

It belongs to the claudin family.

It localises to the cell membrane. The protein localises to the cell junction. It is found in the tight junction. Functionally, component of tight junction (TJ) strands. The chain is Claudin-like protein ZF-A89 (cldnd) from Danio rerio (Zebrafish).